Here is a 307-residue protein sequence, read N- to C-terminus: Protein YIF1A (307 aa).

Residues 1–42 form a disordered region; the sequence is MNFQQQGYRATKPRARASPPTGGPMLFDDTSSGPPPMNNQNY. Over 1–148 the chain is Cytoplasmic; sequence MNFQQQGYRA…TPRHDVNAPD (148 aa). Residues 149–169 traverse the membrane as a helical segment; sequence LYIPTMAFITYILLAGMALGI. Topologically, residues 170 to 184 are lumenal; the sequence is QKRFSPEVLGLCAST. A helical membrane pass occupies residues 185–205; it reads ALVWMIIEVLVMLLSLYLLTV. Residues 206-213 lie on the Cytoplasmic side of the membrane; sequence HTDLSTFD. Residues 214–236 form a helical membrane-spanning segment; sequence LVAYSGYKYVGMILTVFCGLLFG. Over 237-239 the chain is Lumenal; sequence SDG. The chain crosses the membrane as a helical span at residues 240–259; the sequence is YYVALAWSSCALMFFIVRSL. The Cytoplasmic segment spans residues 260–285; it reads KMKILSSISADSMGAGASAKPRFRLY. A helical membrane pass occupies residues 286–306; that stretch reads ITVASAAFQPFIIYWLTAHLV.

The protein belongs to the YIF1 family.

The protein localises to the endoplasmic reticulum membrane. It is found in the golgi apparatus membrane. Its subcellular location is the endoplasmic reticulum-Golgi intermediate compartment membrane. Its function is as follows. Possible role in transport between endoplasmic reticulum and Golgi. The sequence is that of Protein YIF1A (yif1a) from Danio rerio (Zebrafish).